The chain runs to 417 residues: Cotranscriptional regulator ARB2A (417 aa).

A signal peptide spans 1-18 (MSISLSSLIFLPIWINMA). The N-linked (GlcNAc...) asparagine glycan is linked to Asn26. The interval 208 to 248 (KQKMHKQSSSSDGTDEPAGKRERRDKVSKETKKRRDFYEKY) is disordered. Residues 224-237 (PAGKRERRDKVSKE) show a composition bias toward basic and acidic residues. Ser294 serves as the catalytic Nucleophile. Residues 398–417 (SSSQKPALTRRSHRIKHEEL) form a disordered region. Residues 405 to 417 (LTRRSHRIKHEEL) are compositionally biased toward basic residues. Residues 414-417 (HEEL) carry the Prevents secretion from ER motif.

This sequence belongs to the ARB2A family. Interacts with AGO2. Found in a complex, composed of AGO2, CHD7 and ARB2A.

The protein localises to the nucleus. It is found in the cytoplasm. The protein resides in the endoplasmic reticulum. Its function is as follows. Plays a role in the regulation of alternative splicing, by interacting with AGO2 and CHD7. Seems to be required for stabilizing protein-protein interactions at the chromatin-spliceosome interface. May have hydrolase activity. The protein is Cotranscriptional regulator ARB2A (Arb2a) of Mus musculus (Mouse).